Consider the following 335-residue polypeptide: Pyridoxal 5'-phosphate synthase subunit PdxS (335 aa).

D30 provides a ligand contact to D-ribose 5-phosphate. K87 (schiff-base intermediate with D-ribose 5-phosphate) is an active-site residue. Residue G159 participates in D-ribose 5-phosphate binding. R171 provides a ligand contact to D-glyceraldehyde 3-phosphate. D-ribose 5-phosphate is bound by residues G257 and 278–279; that span reads GS.

Belongs to the PdxS/SNZ family. In the presence of PdxT, forms a dodecamer of heterodimers.

The catalysed reaction is aldehydo-D-ribose 5-phosphate + D-glyceraldehyde 3-phosphate + L-glutamine = pyridoxal 5'-phosphate + L-glutamate + phosphate + 3 H2O + H(+). It functions in the pathway cofactor biosynthesis; pyridoxal 5'-phosphate biosynthesis. Functionally, catalyzes the formation of pyridoxal 5'-phosphate from ribose 5-phosphate (RBP), glyceraldehyde 3-phosphate (G3P) and ammonia. The ammonia is provided by the PdxT subunit. Can also use ribulose 5-phosphate and dihydroxyacetone phosphate as substrates, resulting from enzyme-catalyzed isomerization of RBP and G3P, respectively. The polypeptide is Pyridoxal 5'-phosphate synthase subunit PdxS (Thermococcus onnurineus (strain NA1)).